Here is a 504-residue protein sequence, read N- to C-terminus: MYKQILTFLILFLRYILSEFPDDPYEDDDTSDDNNSDYEGQKCNPYRDKACLVNDEALGKKIFESFAEGTKYFTITSSTRGVRFGSEGLALTIQDEFDNPALVSSFYIMYGKVEAEIKGAAGKGIISSFYLQSDDLDEIDVVEIFGSDPYEFQTNFFIKGNTTTYDRGRYHEMHPSPLSEFHKYGIEWSPDLITWYLDDKPVRMLGRRNKHGLPCSPMFLKFSLWSVEDDDEGTIAWAGGAASFSEGPFTMHIKNLKVQDYSKALTYSYGNLRDGNWLDLRADGGYLYEGHKYCLPPKMLDKLKPTPKQETDDDQVLTSSKSQRVATTISEDKNTVSYYPPSATNSHTTWDRLSEWETEQDETGTDDTENSDNEEEESITAIPISKSRKGSTRRLDISTQLPPLSQNESKIAEIKNITTTKHIHNTTTSLQISKIKSKKVGVTTTIYSSSTPQSTSKSRMPYNIFFNYPGKENSRFKSGVSSILATSFSSVVIAEILVIVVLLL.

The N-terminal stretch at 1–18 (MYKQILTFLILFLRYILS) is a signal peptide. The 252-residue stretch at 19–270 (EFPDDPYEDD…YSKALTYSYG (252 aa)) folds into the GH16 domain. Asparagine 34 carries an N-linked (GlcNAc...) asparagine glycan. An intrachain disulfide couples cysteine 43 to cysteine 51. The active-site Nucleophile is glutamate 138. Catalysis depends on glutamate 143, which acts as the Proton donor. A chitin-binding site is contributed by glutamate 143. N-linked (GlcNAc...) asparagine glycosylation occurs at asparagine 161. The chitin site is built by lysine 221, tryptophan 225, and threonine 234. The tract at residues 304 to 404 (KPTPKQETDD…LDISTQLPPL (101 aa)) is disordered. Residues 316–329 (VLTSSKSQRVATTI) show a composition bias toward polar residues. A compositionally biased stretch (acidic residues) spans 356–378 (WETEQDETGTDDTENSDNEEEES). Asparagine 407, asparagine 416, and asparagine 425 each carry an N-linked (GlcNAc...) asparagine glycan. Residue glycine 479 is the site of GPI-anchor amidated glycine attachment. Residues 480–504 (VSSILATSFSSVVIAEILVIVVLLL) constitute a propeptide, removed in mature form.

It belongs to the glycosyl hydrolase 16 family. CRH1 subfamily. Post-translationally, the GPI-anchor is attached to the protein in the endoplasmic reticulum and serves to target the protein to the cell surface. There, the glucosamine-inositol phospholipid moiety is cleaved off and the GPI-modified mannoprotein is covalently attached via its lipidless GPI glycan remnant to the 1,6-beta-glucan of the outer cell wall layer.

It localises to the secreted. Its subcellular location is the cell wall. The protein resides in the membrane. It carries out the reaction Random endo-hydrolysis of N-acetyl-beta-D-glucosaminide (1-&gt;4)-beta-linkages in chitin and chitodextrins.. In terms of biological role, dual chitinase/transglycosylase that plays a role in cell wall architecture. Chitinase and transglycosylase activities are coupled. Required for the polysaccharide cross-linking at the septa and the cell wall. More specifically, transfers chitin to 1,6-beta-glucan in the cell wall. Plays an important role in fungal pathogenesis via its functions in cell wall assembly and regeneration, filamentation, and adherence to host cells. The polypeptide is Crh-like protein CRH12 (CRH12) (Candida albicans (strain SC5314 / ATCC MYA-2876) (Yeast)).